The chain runs to 912 residues: MNMQDANKEESYSMYPKTSSPPPPTPTNMQIPIYQAPLQMYGYTQAPYLYPTQIPAYSFNMVNQNQPIYHQSGSPHHLPPQNNINGGSTTNNNNINKKKWHSNGITNNNGSSGNQGANSSGSGMSYNKSHTYHHNYSNNHIPMMASPNSGSNAGMKKQTNSSNGNGSSATSPSYSSYNSSSQYDLYKFDVTKLKNLKENSSNLIQLPLFINTTEAEFAAASVQRYELNMKALNLNSESLENSSVEKSSAHHHTKSHSIPKHNEEVKTETHGEEEDAHDKKPHASKDAHELKKKTEVKKEDAKQDRNEKVIQEPQATVLPVVDKKEPEESVEENTSKTSSPSPSPPAAKSWSAIASDAIKSRQASNKTVSGSMVTKTPISGTTAGVSSTNMAAATIGKSSSPLLSKQPQKKDKKYVPPSTKGIEPLGSIALRMCFDPDFISYVLRNKDVENKIPVHSIIPRGIINRANICFMSSVLQVLLYCKPFIDVINVLSTRNTNSRVGTSSCKLLDACLTMYKQFDKETYEKKFLENADDAEKTTESDAKKSSKSKSFQHCATADAVKPDEFYKTLSTIPKFKDLQWGHQEDAEEFLTHLLDQLHEELISAIDGLTDNEIQNMLQSINDEQLKVFFIRNLSRYGKAEFIKNASPRLKELIEKYGVINDDSTEENGWHEVSGSSKRGKKTKTAAKRTVEIVPSPISKLFGGQFRSVLDIPNNKESQSITLDPFQTIQLDISDAGVNDLETAFKKFSEYELLPFKSSSGNDVEAKKQTFIDKLPQVLLIQFKRFSFINNVNKDNAMTNYNAYNGRIEKIRKKIKYGHELIIPEESMSSITLKNNTSGIDDRRYKLTGVIYHHGVSSDGGHYTADVYHSEHNKWYRIDDVNITELEDDDVLKGGEEASDSRTAYILMYQKRN.

Basic and acidic residues predominate over residues 1–11 (MNMQDANKEES). 4 disordered regions span residues 1 to 30 (MNMQ…TNMQ), 68 to 176 (IYHQ…SYSS), 241 to 384 (NSSV…TTAG), and 396 to 417 (GKSS…YVPP). 3 stretches are compositionally biased toward low complexity: residues 82–95 (NNIN…NNNI), 102–140 (SNGI…SNNH), and 159–176 (TNSS…SYSS). Basic residues predominate over residues 249–259 (AHHHTKSHSIP). The span at 260–310 (KHNEEVKTETHGEEEDAHDKKPHASKDAHELKKKTEVKKEDAKQDRNEKVI) shows a compositional bias: basic and acidic residues. The span at 335 to 355 (SKTSSPSPSPPAAKSWSAIAS) shows a compositional bias: low complexity. 2 stretches are compositionally biased toward polar residues: residues 361-384 (RQAS…TTAG) and 396-406 (GKSSSPLLSKQ). Residues 460 to 911 (RGIINRANIC…TAYILMYQKR (452 aa)) enclose the USP domain. Catalysis depends on Cys-469, which acts as the Nucleophile. His-861 functions as the Proton acceptor in the catalytic mechanism.

This sequence belongs to the peptidase C19 family. In terms of assembly, heterotetramer with BRE5; contains two molecules of BRE5 and two molecules of UBP3. Forms a complex composed of CDC48, DOA1, deubiquitinase UBP3 and probably BRE5. Within the complex interacts directly with DOA1 and CDC48 in a BRE5-independent manner.

The catalysed reaction is Thiol-dependent hydrolysis of ester, thioester, amide, peptide and isopeptide bonds formed by the C-terminal Gly of ubiquitin (a 76-residue protein attached to proteins as an intracellular targeting signal).. Has an ATP-independent isopeptidase activity, cleaving at the C-terminus of the ubiquitin moiety in natural or engineered linear fusion proteins, irrespective of their size or the presence of an N-terminal extension to ubiquitin. Plays a role in regulation of silencing by interacting with SIR4. Also, in conjunction with BRE5, cleaves ubiquitin, leading to the subsequent mono-ubiquitination of SEC23. Required for ribophagy, a process which relocalizes ribosomal particles into the vacuole for degradation in response to starvation. The chain is Ubiquitin carboxyl-terminal hydrolase 3 (UBP3) from Saccharomyces cerevisiae (strain ATCC 204508 / S288c) (Baker's yeast).